The sequence spans 434 residues: Hydrogenobyrinate a,c-diamide synthase (434 aa).

The GATase cobBQ-type domain maps to Arg-243 to Ala-434. Cys-326 acts as the Nucleophile in catalysis.

This sequence belongs to the CobB/CbiA family. As to quaternary structure, homodimer. Mg(2+) serves as cofactor.

It carries out the reaction hydrogenobyrinate + 2 L-glutamine + 2 ATP + 2 H2O = hydrogenobyrinate a,c-diamide + 2 L-glutamate + 2 ADP + 2 phosphate + 2 H(+). The protein operates within cofactor biosynthesis; adenosylcobalamin biosynthesis; cob(II)yrinate a,c-diamide from precorrin-2 (aerobic route): step 9/10. In terms of biological role, catalyzes the ATP-dependent amidation of the two carboxylate groups at positions a and c of hydrogenobyrinate, using either L-glutamine or ammonia as the nitrogen source. To a much lesser extent, can also use cobyrinate as substrate in vitro, but the physiological substrate is indeed hydrogenobyrinate, as part of the aerobic pathway for cobalamin biosynthesis. This is Hydrogenobyrinate a,c-diamide synthase from Sinorhizobium sp.